Consider the following 352-residue polypeptide: Guanidino acid hydrolase, mitochondrial (352 aa).

Residues 1–35 constitute a mitochondrion transit peptide; sequence MLRLLASGCARGPGPGVGARPAAGLFHPGRRQSRQ. Positions 11–49 are disordered; the sequence is RGPGPGVGARPAAGLFHPGRRQSRQASDAPRNQPPSPEF. Mn(2+)-binding residues include H162, D185, H187, and D189. N6-acetyllysine is present on K193. K217 bears the N6-acetyllysine; alternate mark. K217 carries the N6-succinyllysine; alternate modification. D276 and D278 together coordinate Mn(2+).

Belongs to the ureohydrolase superfamily. Arginase family. It depends on Mn(2+) as a cofactor. Highly expressed in liver and kidney. Also found in skeletal muscle, fetal liver, brain, testis, skin and the gastrointestinal tract. Within brain, expression is higher in the cerebral cortex with lower levels in the medulla and spinal cord.

The protein resides in the mitochondrion. The enzyme catalyses 3-guanidinopropanoate + H2O = urea + beta-alanine. It carries out the reaction 4-guanidinobutanoate + H2O = urea + 4-aminobutanoate. It catalyses the reaction taurocyamine + H2O = urea + taurine. The catalysed reaction is L-arginine + H2O = urea + L-ornithine. The protein operates within nitrogen metabolism; urea cycle; L-ornithine and urea from L-arginine: step 1/1. In terms of biological role, hydrolyzes linear guanidino acids to form urea and the corresponding amines. Displays specificity for substrates having a negatively charged head group and short chains including taurocyamine, guanidino propanoic and butanoic acids. May protect cells by detoxifying potentially harmful amounts of guanidino acids. Metabolizes L-arginine with low efficiency. The chain is Guanidino acid hydrolase, mitochondrial (AGMAT) from Homo sapiens (Human).